The chain runs to 379 residues: tRNA-specific 2-thiouridylase MnmA (379 aa).

ATP contacts are provided by residues 23–30 (AMSGGVDS) and Leu-49. Catalysis depends on Cys-117, which acts as the Nucleophile. A disulfide bridge links Cys-117 with Cys-214. An ATP-binding site is contributed by Gly-141. The interval 163–165 (RDQ) is interaction with tRNA. The active-site Cysteine persulfide intermediate is the Cys-214.

It belongs to the MnmA/TRMU family.

It localises to the cytoplasm. It carries out the reaction S-sulfanyl-L-cysteinyl-[protein] + uridine(34) in tRNA + AH2 + ATP = 2-thiouridine(34) in tRNA + L-cysteinyl-[protein] + A + AMP + diphosphate + H(+). Functionally, catalyzes the 2-thiolation of uridine at the wobble position (U34) of tRNA, leading to the formation of s(2)U34. This Cereibacter sphaeroides (strain KD131 / KCTC 12085) (Rhodobacter sphaeroides) protein is tRNA-specific 2-thiouridylase MnmA.